The sequence spans 300 residues: Rhodopsin (300 aa).

The Extracellular portion of the chain corresponds to 1-18 (LHMIHLHWYQYPPMNPMM). Residues 19-43 (YPLLLVFMLITGILCLAGNFVTIWV) traverse the membrane as a helical segment. Topologically, residues 44 to 55 (FMNTKSLRTPAN) are cytoplasmic. A helical membrane pass occupies residues 56–78 (LLVVNLAMSDFLMMFTMFPPMMV). At 79–92 (TCYYHTWTLGATFC) the chain is on the extracellular side. Cys-92 and Cys-168 are disulfide-bonded. Residues 93 to 115 (QVYAFLGNLCGCASIWTMVFITF) traverse the membrane as a helical segment. The short motif at 116–118 (DRY) is the 'Ionic lock' involved in activated form stabilization element. Residues 116 to 134 (DRYNVIVKGVAGEPLSTKK) are Cytoplasmic-facing. The helical transmembrane segment at 135-155 (ASLWILTIWILSITWCIAPFF) threads the bilayer. At 156 to 181 (GWNRYVPEGNTGCGTDYLSEDILSRS) the chain is on the extracellular side. The helical transmembrane segment at 182–203 (YLYIYSTWVYFLPLAITIYCHV) threads the bilayer. The Cytoplasmic portion of the chain corresponds to 204–244 (FIIKAVAAHEKGMRDQAKKMGIKSLRNEEAQKTSAECRLAK). Residues 245 to 266 (IAMTTVALWFIAWTPYLLINWV) form a helical membrane-spanning segment. Residues 267-277 (GMFARSYLSPV) are Extracellular-facing. The helical transmembrane segment at 278-299 (YTIWGYVFAKANAVYNPIVYAI) threads the bilayer. At Lys-287 the chain carries N6-(retinylidene)lysine.

The protein belongs to the G-protein coupled receptor 1 family. Opsin subfamily. Homodimer. Interacts with GNAQ. Post-translationally, contains one covalently linked retinal chromophore.

Its subcellular location is the cell projection. The protein resides in the rhabdomere membrane. In terms of biological role, photoreceptor required for image-forming vision at low light intensity. Can use both retinal and 3-dehydroretinal as visual pigment. Light-induced isomerization of 11-cis to all-trans retinal triggers a conformational change that activates signaling via G-proteins. Signaling via GNAQ probably mediates the activation of phospholipase C. The chain is Rhodopsin (RHO) from Cambarus maculatus (Freckled crayfish).